We begin with the raw amino-acid sequence, 270 residues long: Phosphatidate cytidylyltransferase (270 aa).

8 consecutive transmembrane segments (helical) span residues 17–37, 55–75, 81–101, 104–124, 129–149, 170–190, 193–213, and 248–268; these read FVVLCFVSYESLIGLVSAILI, FFYVILLALYPVLYGLVFEEP, ILFITGVVFSLITDKDPSQVF, VAAFSIALIYVTFFLSFFLPI, GAANALLVLTSTWVFDSFAYF, EGVIGGFLGVVIYTFLYRLVV, LLSVNVISFRTFLPFAATVAI, and IDGLLFVAPVSYIVFKILEGV.

This sequence belongs to the CDS family.

The protein resides in the cell membrane. It catalyses the reaction a 1,2-diacyl-sn-glycero-3-phosphate + CTP + H(+) = a CDP-1,2-diacyl-sn-glycerol + diphosphate. It participates in phospholipid metabolism; CDP-diacylglycerol biosynthesis; CDP-diacylglycerol from sn-glycerol 3-phosphate: step 3/3. This chain is Phosphatidate cytidylyltransferase (cdsA), found in Thermotoga maritima (strain ATCC 43589 / DSM 3109 / JCM 10099 / NBRC 100826 / MSB8).